The chain runs to 859 residues: Chitin synthase 1 (859 aa).

Residues 1–22 (MRRWFKKTLPRPPDEEESAGLT) form a disordered region. 5 helical membrane passes run 544 to 564 (LATIVFGWFNIGNFFIIFYIL), 615 to 635 (MVIMYSILMGYLLFCSGWIAY), 662 to 682 (FINIVISLSSTYGMYLVVSII), 793 to 813 (YVVLTWILSNLFLVGIVLSIP), and 833 to 853 (LWSVVAFSVFRFIGCIFYLFI).

It belongs to the chitin synthase family.

It localises to the cell membrane. It catalyses the reaction [(1-&gt;4)-N-acetyl-beta-D-glucosaminyl](n) + UDP-N-acetyl-alpha-D-glucosamine = [(1-&gt;4)-N-acetyl-beta-D-glucosaminyl](n+1) + UDP + H(+). Polymerizes chitin, a structural polymer of the cell wall and septum, by transferring the sugar moiety of UDP-GlcNAc to the non-reducing end of the growing chitin polymer. This Schizosaccharomyces pombe (strain 972 / ATCC 24843) (Fission yeast) protein is Chitin synthase 1 (chs1).